We begin with the raw amino-acid sequence, 247 residues long: Adenosylcobinamide-GDP ribazoletransferase (247 aa).

A run of 5 helical transmembrane segments spans residues 34-54 (IITF…VFMV), 59-79 (CGVP…TGGF), 113-133 (GGLA…ELAL), 138-158 (ILAS…LLMY), and 194-214 (VLLP…AIFI).

This sequence belongs to the CobS family. Mg(2+) is required as a cofactor.

The protein localises to the cell inner membrane. The enzyme catalyses alpha-ribazole + adenosylcob(III)inamide-GDP = adenosylcob(III)alamin + GMP + H(+). It carries out the reaction alpha-ribazole 5'-phosphate + adenosylcob(III)inamide-GDP = adenosylcob(III)alamin 5'-phosphate + GMP + H(+). The protein operates within cofactor biosynthesis; adenosylcobalamin biosynthesis; adenosylcobalamin from cob(II)yrinate a,c-diamide: step 7/7. Joins adenosylcobinamide-GDP and alpha-ribazole to generate adenosylcobalamin (Ado-cobalamin). Also synthesizes adenosylcobalamin 5'-phosphate from adenosylcobinamide-GDP and alpha-ribazole 5'-phosphate. The protein is Adenosylcobinamide-GDP ribazoletransferase of Escherichia coli (strain 55989 / EAEC).